The primary structure comprises 226 residues: ATP synthase F(0) complex subunit a (226 aa).

The next 6 membrane-spanning stretches (helical) occupy residues Phe-9–Met-29, Trp-68–Val-88, Gln-97–Phe-117, Ile-138–Ile-158, Ile-164–Ile-184, and Ile-201–His-223.

This sequence belongs to the ATPase A chain family. As to quaternary structure, component of the ATP synthase complex composed at least of ATP5F1A/subunit alpha, ATP5F1B/subunit beta, ATP5MC1/subunit c (homooctomer), MT-ATP6/subunit a, MT-ATP8/subunit 8, ATP5ME/subunit e, ATP5MF/subunit f, ATP5MG/subunit g, ATP5MK/subunit k, ATP5MJ/subunit j, ATP5F1C/subunit gamma, ATP5F1D/subunit delta, ATP5F1E/subunit epsilon, ATP5PF/subunit F6, ATP5PB/subunit b, ATP5PD/subunit d, ATP5PO/subunit OSCP. ATP synthase complex consists of a soluble F(1) head domain (subunits alpha(3) and beta(3)) - the catalytic core - and a membrane F(0) domain - the membrane proton channel (subunits c, a, 8, e, f, g, k and j). These two domains are linked by a central stalk (subunits gamma, delta, and epsilon) rotating inside the F1 region and a stationary peripheral stalk (subunits F6, b, d, and OSCP). Interacts with DNAJC30; interaction is direct.

The protein resides in the mitochondrion inner membrane. The catalysed reaction is H(+)(in) = H(+)(out). Its function is as follows. Subunit a, of the mitochondrial membrane ATP synthase complex (F(1)F(0) ATP synthase or Complex V) that produces ATP from ADP in the presence of a proton gradient across the membrane which is generated by electron transport complexes of the respiratory chain. ATP synthase complex consist of a soluble F(1) head domain - the catalytic core - and a membrane F(1) domain - the membrane proton channel. These two domains are linked by a central stalk rotating inside the F(1) region and a stationary peripheral stalk. During catalysis, ATP synthesis in the catalytic domain of F(1) is coupled via a rotary mechanism of the central stalk subunits to proton translocation. With the subunit c (ATP5MC1), forms the proton-conducting channel in the F(0) domain, that contains two crucial half-channels (inlet and outlet) that facilitate proton movement from the mitochondrial intermembrane space (IMS) into the matrix. Protons are taken up via the inlet half-channel and released through the outlet half-channel, following a Grotthuss mechanism. In Dugong dugon (Dugong), this protein is ATP synthase F(0) complex subunit a.